We begin with the raw amino-acid sequence, 665 residues long: Prelamin-A/C (665 aa).

Met-1 carries the post-translational modification N-acetylmethionine. A disordered region spans residues 1 to 25 (METPSQRRATRSGAQASSTPLSPTR). The head stretch occupies residues 1–33 (METPSQRRATRSGAQASSTPLSPTRITRLQEKE). Positions 1 to 130 (METPSQRRAT…TKKEGDLLAA (130 aa)) are interaction with MLIP. At Thr-3 the chain carries Phosphothreonine. Ser-5 is modified (phosphoserine). Position 10 is a phosphothreonine (Thr-10). Phosphoserine occurs at positions 12 and 18. A Phosphothreonine modification is found at Thr-19. Residue Ser-22 is modified to Phosphoserine. Residues 31–387 (EKEDLQELND…KLLEGEEERL (357 aa)) form the IF rod domain. At Lys-32 the chain carries N6-acetyllysine; alternate. Lys-32 carries the N6-succinyllysine; alternate modification. A Glycyl lysine isopeptide (Lys-Gly) (interchain with G-Cter in SUMO2); alternate cross-link involves residue Lys-32. Residues 34-70 (DLQELNDRLAVYIDRVRSLETENAGLRLRITESEEVV) form a coil 1A region. Phosphoserine occurs at positions 51, 66, and 71. A linker 1 region spans residues 71–80 (SREVSGIKAA). An N6-acetyllysine mark is found at Lys-78 and Lys-97. Residues 81 to 218 (YEAELGDARK…NIYSEELRET (138 aa)) form a coil 1B region. Residue Lys-97 forms a Glycyl lysine isopeptide (Lys-Gly) (interchain with G-Cter in SUMO2) linkage. The residue at position 107 (Ser-107) is a Phosphoserine. N6-acetyllysine occurs at positions 108, 114, 123, 135, 144, and 155. The residue at position 171 (Lys-171) is an N6-acetyllysine; alternate. Lys-171 carries the N6-succinyllysine; alternate modification. Lys-171 participates in a covalent cross-link: Glycyl lysine isopeptide (Lys-Gly) (interchain with G-Cter in SUMO2); alternate. 3 positions are modified to N6-acetyllysine: Lys-180, Lys-201, and Lys-208. Residue Lys-201 forms a Glycyl lysine isopeptide (Lys-Gly) (interchain with G-Cter in SUMO2); alternate linkage. Lys-201 is covalently cross-linked (Glycyl lysine isopeptide (Lys-Gly) (interchain with G-Cter in SUMO); alternate). Lys-208 participates in a covalent cross-link: Glycyl lysine isopeptide (Lys-Gly) (interchain with G-Cter in SUMO2). Ser-212 bears the Phosphoserine mark. Residues Lys-219 and Lys-233 each participate in a glycyl lysine isopeptide (Lys-Gly) (interchain with G-Cter in SUMO2) cross-link. The linker 2 stretch occupies residues 219–242 (KRRHETRLVEIDNGKQREFESRLA). 4 positions are modified to N6-acetyllysine: Lys-233, Lys-260, Lys-265, and Lys-270. Residues 243-383 (DALQELRAQH…HAYRKLLEGE (141 aa)) form a coil 2 region. Lys-260 is covalently cross-linked (Glycyl lysine isopeptide (Lys-Gly) (interchain with G-Cter in SUMO2); alternate). Lys-270 is covalently cross-linked (Glycyl lysine isopeptide (Lys-Gly) (interchain with G-Cter in SUMO2); alternate). A phosphoserine mark is found at Ser-277, Ser-282, Ser-301, and Ser-307. Lys-311 participates in a covalent cross-link: Glycyl lysine isopeptide (Lys-Gly) (interchain with G-Cter in SUMO2); alternate. 3 positions are modified to N6-acetyllysine: Lys-311, Lys-316, and Lys-341. Residues Lys-366 and Lys-378 each participate in a glycyl lysine isopeptide (Lys-Gly) (interchain with G-Cter in SUMO2) cross-link. Residues 384 to 442 (EERLRLSPSPTSQRSRGRASSHSSQSQGGGSVTKKRKLESSESRSSFSQHARTSGRVAV) form a disordered region. Positions 384–665 (EERLRLSPSP…SQSSQNCSIM (282 aa)) are tail. Ser-390, Ser-392, Ser-395, Ser-398, Ser-403, Ser-404, Ser-406, Ser-407, Ser-409, and Ser-414 each carry phosphoserine. Ser-392 is subject to Phosphoserine; by CDK1. A compositionally biased stretch (low complexity) spans 395-409 (SQRSRGRASSHSSQS). Thr-416 carries the phosphothreonine modification. N6-acetyllysine is present on residues Lys-417 and Lys-420. Glycyl lysine isopeptide (Lys-Gly) (interchain with G-Cter in SUMO2) cross-links involve residues Lys-417 and Lys-420. A Nuclear localization signal motif is present at residues 417–422 (KKRKLE). Phosphoserine is present on residues Ser-423, Ser-426, Ser-429, and Ser-431. Residues 428-545 (SSFSQHARTS…EEVAMRKLVR (118 aa)) form the LTD domain. Lys-450 participates in a covalent cross-link: Glycyl lysine isopeptide (Lys-Gly) (interchain with G-Cter in SUMO2); alternate. N6-acetyllysine is present on residues Lys-450 and Lys-457. Phosphoserine is present on residues Ser-458, Glu-460, and Ser-463. An N6-acetyllysine modification is found at Lys-486. Residue Lys-486 forms a Glycyl lysine isopeptide (Lys-Gly) (interchain with G-Cter in SUMO2) linkage. Thr-496 carries the post-translational modification Phosphothreonine. A Phosphoserine modification is found at Ser-500. Residues Thr-505 and Thr-510 each carry the phosphothreonine modification. 2 positions are modified to phosphoserine: Ser-533 and Ser-546. A Phosphothreonine modification is found at Thr-548. Residues 553–577 (NEDDDEDGEELLHHHRGSHCSGSGD) are disordered. A phosphoserine mark is found at Ser-570, Cys-572, and Ser-573. Residue Lys-599 forms a Glycyl lysine isopeptide (Lys-Gly) (interchain with G-Cter in SUMO2); alternate linkage. Residue Lys-599 forms a Glycyl lysine isopeptide (Lys-Gly) (interchain with G-Cter in SUMO1); alternate linkage. Ser-613, Ser-614, Ser-617, and Ser-620 each carry phosphoserine. 2 O-linked (GlcNAc) serine glycosylation sites follow: Ser-626 and Ser-629. 4 positions are modified to phosphoserine: Ser-629, Ser-633, Ser-637, and Ser-653. Residues 648-662 (LLGNSSPRSQSSQNC) constitute a propeptide, removed in Lamin-A/C form. Cys-662 bears the Cysteine methyl ester mark. Residue Cys-662 is the site of S-farnesyl cysteine attachment. The propeptide at 663–665 (SIM) is removed in Prelamin-A/C form and in Lamin-A/C form.

Belongs to the intermediate filament family. In terms of assembly, homodimer of lamin A and lamin C. Lamin dimers then assemble into dimeric head-to-tail polymers. Ultimately, two head-to-tail polymers assemble laterally into a protofilament with a uniformly shaped rod of 3.5 nm in diameter. Interacts with lamin-associated polypeptides IA, IB and TMPO-alpha, RB1 and with emerin. Proteolytically processed isoform A interacts with NARF. Interacts with SREBF1, SREBF2, SUN1, SUN2 and TMEM43. Interacts with TMEM201. Prelamin-A/C interacts with EMD. Interacts with DMPK; may regulate nuclear envelope stability. Interacts with MLIP. Interacts with SUV39H1; the interaction increases stability of SUV39H1. Interacts with ITSN1 isoform 2. Interacts with IFFO1; the interaction forms an interior nucleoskeleton and the recruitment to DNA double-strand breaks. As to quaternary structure, interacts with EMD. Interacts (via C-terminus) with LEMD2 (via N-terminus) (in vitro). In terms of processing, proteolytic cleavage of the C-terminal of 18 residues of prelamin-A/C results in the production of lamin-A/C. The prelamin-A/C maturation pathway includes farnesylation of CAAX motif by protein farnesyltransferase (FNTA and FNTB), removal of the last three amino acids (-AAX) by RCE1/FACE2 and/or ZMPSTE24, methylation of the C-terminal cysteine by ICMT and endoproteolytic removal of the last 15 C-terminal amino acids by ZMPSTE24. Proteolytic cleavage requires prior farnesylation and methylation, and absence of these blocks cleavage. Farnesylation of prelamin-A/C facilitates nuclear envelope targeting. Post-translationally, phosphorylation plays a key role in lamin organization, subcellular localization and nuclear envelope disintegration. Phosphorylation by CDK1 at Ser-22 and Ser-392 at the onset of mitosis drives lamin disassembly and nuclear envelope breakdown. Phosphorylation at Ser-22 and Ser-392 during interphase promotes localization to the nucleoplasm and regulates lamina assembly. Phosphorylation at Ser-22, Ser-392 and Ser-629 during interphase causes redistribution between the nucleus and the cytoplasm. Phosphorylation at Ser-22 by CDK1 regulates matrix stiffness. Phosphorylation status of Ser-22 determines its localization between double-strand break (DSB) sites and the nuclear matrix. Phosphorylated by ATR at Ser-282 in response to DNA damage, leading to lamin disassembly and nuclear envelope rupture. Phosphorylation also regulates stability in micronuclei arising from genome instability: phosphorylation at Ser-395 by ATR in response to genome instability and double-stranded DNA breaks primes LMNA for subsequent phosphorylation at Ser-392 by CDK1 and micronuclei envelope rupture. The rupture of micronuclear envelope triggers the cGAS-STING pathway thereby activating the type I interferon response and innate immunity. In terms of processing, isoform C is phosphorylated on Ser-392, Ser-407 and Ser-409 at interphase. Acetylation by KAT8 is required for nuclear architecture. Post-translationally, sumoylation is necessary for the localization to the nuclear envelope. In terms of processing, the N-terminus is blocked. In terms of tissue distribution, expressed in liver and in bone marrow (at protein level). Expressed in cardiomyocytes. Specifically expressed in germ cells.

The protein resides in the nucleus lamina. It localises to the nucleus envelope. Its subcellular location is the nucleus. It is found in the nucleoplasm. The protein localises to the nucleus matrix. Lamins are intermediate filament proteins that assemble into a filamentous meshwork, and which constitute the major components of the nuclear lamina, a fibrous layer on the nucleoplasmic side of the inner nuclear membrane. Lamins provide a framework for the nuclear envelope, bridging the nuclear envelope and chromatin, thereby playing an important role in nuclear assembly, chromatin organization, nuclear membrane and telomere dynamics. Lamin A and C also regulate matrix stiffness by conferring nuclear mechanical properties. The structural integrity of the lamina is strictly controlled by the cell cycle, as seen by the disintegration and formation of the nuclear envelope in prophase and telophase, respectively. Lamin A and C are present in equal amounts in the lamina of mammals. Also invoved in DNA repair: recruited by DNA repair proteins XRCC4 and IFFO1 to the DNA double-strand breaks (DSBs) to prevent chromosome translocation by immobilizing broken DNA ends. Required for normal development of peripheral nervous system and skeletal muscle and for muscle satellite cell proliferation. Required for osteoblastogenesis and bone formation. Also prevents fat infiltration of muscle and bone marrow, helping to maintain the volume and strength of skeletal muscle and bone. Required for cardiac homeostasis. In terms of biological role, prelamin-A/C can accelerate smooth muscle cell senescence. It acts to disrupt mitosis and induce DNA damage in vascular smooth muscle cells (VSMCs), leading to mitotic failure, genomic instability, and premature senescence. Functionally, isoform C2 may have a role in determining the organization of nuclear and chromosomal structures during spermatogenesis. The protein is Prelamin-A/C (Lmna) of Mus musculus (Mouse).